We begin with the raw amino-acid sequence, 661 residues long: Pumilio domain-containing protein C56F2.08c (661 aa).

Residues 1-74 (MLYVSNLPVG…GPVQVMLAKP (74 aa)) enclose the RRM domain. Serine 102 is modified (phosphoserine). A Phosphothreonine modification is found at threonine 104. Serine 105 carries the phosphoserine modification. One can recognise a PUM-HD domain in the interval 129–482 (INLDIVDSMI…RLMEEVGMTS (354 aa)). Pumilio repeat units follow at residues 191–226 (SMLDDVAELSSDYLGNTVVQKFFEYCSDPIKEAMLE), 227–263 (RIAPYLAAIGIHKNGTWAAQKIIDVASTEKQMDLIVK), 264–302 (HLRPYTALLYFDQFGNYVAQCCLRFKYPKNTFLFEVMAR), and 374–410 (HLATHLHTTCTHKLASTLIFKLINNKQEPESRNLLLK). Phosphoserine occurs at positions 482, 486, 488, and 490.

The protein localises to the cytoplasm. The sequence is that of Pumilio domain-containing protein C56F2.08c from Schizosaccharomyces pombe (strain 972 / ATCC 24843) (Fission yeast).